The following is a 35-amino-acid chain: Endochitinase 2 (35 aa).

Belongs to the glycosyl hydrolase 19 family. Chitinase class I subfamily.

It catalyses the reaction Random endo-hydrolysis of N-acetyl-beta-D-glucosaminide (1-&gt;4)-beta-linkages in chitin and chitodextrins.. Its function is as follows. Defense against chitin-containing fungal pathogens. The protein is Endochitinase 2 of Capsicum chinense (Scotch bonnet).